The following is a 1128-amino-acid chain: Scavenger receptor cysteine-rich domain superfamily protein (1128 aa).

An N-terminal signal peptide occupies residues 1 to 24 (MTSLRRGNICWVAVCAALLTLTRG). The Extracellular portion of the chain corresponds to 25–1051 (IDVIAKPSRT…VGAQAGPAGG (1027 aa)). 9 SRCR domains span residues 40–140 (VQLV…VVCN), 143–245 (VRLA…VICT), 248–348 (IRLV…VICT), 351–450 (VRLV…AKCQ), 453–553 (VQLV…VVCR), 555–654 (IRLA…VVCR), 657–757 (LRLA…VVCT), 759–866 (LRLT…VLCK), and 868–968 (IRLV…VQCK). Disulfide bonds link Cys-65-Cys-129, Cys-78-Cys-139, Cys-109-Cys-119, Cys-168-Cys-234, Cys-181-Cys-244, Cys-212-Cys-222, Cys-273-Cys-337, Cys-286-Cys-347, Cys-316-Cys-326, Cys-376-Cys-439, Cys-389-Cys-449, Cys-419-Cys-429, Cys-478-Cys-542, Cys-491-Cys-552, Cys-522-Cys-532, Cys-583-Cys-644, Cys-596-Cys-653, Cys-624-Cys-634, Cys-682-Cys-746, Cys-695-Cys-756, and Cys-726-Cys-736. N-linked (GlcNAc...) asparagine glycosylation is present at Asn-87. Residues Asn-190 and Asn-194 are each glycosylated (N-linked (GlcNAc...) asparagine). Residue Asn-229 is glycosylated (N-linked (GlcNAc...) asparagine). N-linked (GlcNAc...) asparagine glycosylation is present at Asn-422. Asn-601 and Asn-612 each carry an N-linked (GlcNAc...) asparagine glycan. N-linked (GlcNAc...) asparagine glycosylation is found at Asn-765, Asn-808, Asn-834, and Asn-936. Disulfide bonds link Cys-803–Cys-865, Cys-833–Cys-843, Cys-906–Cys-967, Cys-937–Cys-947, Cys-971–Cys-1013, and Cys-999–Cys-1026. Residues 969-1028 (AGCDWPGPIRHGSFSPNRSSYDPLTTIDVKCDAGYELMGSKTLQCVTGCDWSRPTPECQR) form the Sushi domain. N-linked (GlcNAc...) asparagine glycosylation occurs at Asn-985. An N-linked (GlcNAc...) asparagine glycan is attached at Asn-1031. A helical membrane pass occupies residues 1052–1072 (VMLIIGIILGAVVMMLIACVA). The Cytoplasmic portion of the chain corresponds to 1073-1128 (LYLKGRNKNIGRGNPATTSAIWKPKKEFDELKEPVLSFSAMTAGGAGPEDGMGEDI).

In terms of tissue distribution, from the mid-gastrula stage, expressed only in mesenchyme cells that are migrating toward the body wall. At the brachiolaria stage, expressed in presumptive coelomocytes of the coelomic pouch. Also expressed in adult coelomocytes (at protein level).

It is found in the cytoplasmic vesicle membrane. Involved in aggregate formation and phagocytosis by larval mesenchyme cells and adult coelomocytes. Binds to bacteria and may act as an opsonin in the innate immune system. The polypeptide is Scavenger receptor cysteine-rich domain superfamily protein (Patiria pectinifera (Starfish)).